The sequence spans 595 residues: Chaperone protein HscA homolog (595 aa).

The protein belongs to the heat shock protein 70 family.

Its function is as follows. Chaperone involved in the maturation of iron-sulfur cluster-containing proteins. Has a low intrinsic ATPase activity which is markedly stimulated by HscB. This Rickettsia rickettsii (strain Iowa) protein is Chaperone protein HscA homolog.